The following is a 382-amino-acid chain: MTEEMNQIDVQVPEVGDVVKGIVTKVEDKHVDVEIINVKQSGIIPISELSSLHVEKASDVVKVDDELDLKVTKVEDDALILSKRAVDADRAWEDLEKKFETKEVFEAEVKDVVKGGLVVDIGVRGFIPASLVEAHFVEDFTDYKGKTLSLLVVELDRDKNRVILSHRAVVESEQANKKQELLQSLEVGSVLDGKVQRLTDFGAFVDIGGIDGLVHISQLSHSHVEKPSDVVEEGQEVKVKVLSVDRDNERISLSIKDTLPGPWNQIGEKVKPGDVLEGTVQRLVSFGAFVEILPGVEGLVHISQISNKHIGTPHEVLEEGQTVKVKVLDVNENEERISLSMRELEETPKADQEDYRQYQAKEETSTGFQLGDLIGDKLNKLK.

4 S1 motif domains span residues 16-84, 102-167, 188-256, and 273-342; these read GDVV…LSKR, KEVF…LSHR, GSVL…LSIK, and GDVL…LSMR. Serine 243 is subject to Phosphoserine.

The protein belongs to the bacterial ribosomal protein bS1 family.

In terms of biological role, plays a role in sporulation. Cannot be expressed in wild-type E.coli, does not complement an E.coli rpsA deletion. In Bacillus subtilis (strain 168), this protein is Small ribosomal subunit protein bS1 homolog.